We begin with the raw amino-acid sequence, 193 residues long: RNA pyrophosphohydrolase (193 aa).

Residues 6–149 (GFRPNVGIIL…KRDVYQRALQ (144 aa)) enclose the Nudix hydrolase domain. The Nudix box signature appears at 38-59 (GGIKFGETPEQAMFRELEEEVG). The disordered stretch occupies residues 174 to 193 (THSARKTDEPSTEQTKPNNE).

This sequence belongs to the Nudix hydrolase family. RppH subfamily. A divalent metal cation is required as a cofactor.

Functionally, accelerates the degradation of transcripts by removing pyrophosphate from the 5'-end of triphosphorylated RNA, leading to a more labile monophosphorylated state that can stimulate subsequent ribonuclease cleavage. The chain is RNA pyrophosphohydrolase from Herminiimonas arsenicoxydans.